A 312-amino-acid chain; its full sequence is MEEECRVLSIQSHVVRGYVGNRAATFPLQVLGFEVDAVNSVQFSNHTGYSHWKGQVLNSDELQELYDGLKLNHVNQYDYVLTGYTRDKSFLAMVVDIVQELKQQNPRLVYVCDPVMGDQRNGEGAMYVPDDLLPVYREKVVPVADIITPNQFEAELLTGRKIHSQEEALEVMDMLHSMGPDTVVITSSNLLSPRGSDYLMALGSQRTRAPDGSVVTQRIRMEMHKVDAVFVGTGDLFAAMLLAWTHKHPNNLKVACEKTVSAMHHVLQRTIKCAKAKSGEGVKPSPAQLELRMVQSKKDIESPEIVVQATVL.

An N-acetylmethionine modification is found at Met-1. The pyridoxal 5'-phosphate site is built by Ser-12 and Thr-47. Residues Ser-12 and Thr-47 each contribute to the pyridoxamine site. Ser-59 carries the phosphoserine modification. Asp-113 contributes to the K(+) binding site. Residue Tyr-127 participates in pyridoxal 5'-phosphate binding. A K(+)-binding site is contributed by Thr-148. Residue Asn-150 coordinates ADP. Asn-150 lines the ATP pocket. The residue at position 164 (Ser-164) is a Phosphoserine. Thr-186 is a binding site for K(+). ADP is bound at residue 186–187 (TS). ATP is bound at residue 186–187 (TS). At Ser-213 the chain carries Phosphoserine. Residues 223-226 (MHKV) and 233-234 (TG) each bind ADP. Residues 223–226 (MHKV) and 233–234 (TG) each bind ATP. 232–235 (GTGD) is a pyridoxal 5'-phosphate binding site. Pyridoxamine is bound at residue Asp-235. Asp-235 functions as the Proton acceptor in the catalytic mechanism. Phosphoserine is present on Ser-285.

It belongs to the pyridoxine kinase family. As to quaternary structure, homodimer. Zn(2+) serves as cofactor. Requires Mg(2+) as cofactor. As to expression, ubiquitous.

It localises to the cytoplasm. Its subcellular location is the cytosol. The enzyme catalyses pyridoxal + ATP = pyridoxal 5'-phosphate + ADP + H(+). It catalyses the reaction pyridoxamine + ATP = pyridoxamine 5'-phosphate + ADP + H(+). It carries out the reaction pyridoxine + ATP = pyridoxine 5'-phosphate + ADP + H(+). It participates in cofactor metabolism; pyridoxal 5'-phosphate salvage; pyridoxal 5'-phosphate from pyridoxal: step 1/1. Its pathway is cofactor metabolism; pyridoxal 5'-phosphate salvage; pyridoxine 5'-phosphate from pyridoxine: step 1/1. The protein operates within cofactor metabolism; pyridoxal 5'-phosphate salvage; pyridoxamine 5'-phosphate from pyridoxamine: step 1/1. With respect to regulation, activated by K(+). Activity is increased in the presence of Na(+). Catalyzes the phosphorylation of the dietary vitamin B6 vitamers pyridoxal (PL), pyridoxine (PN) and pyridoxamine (PM) to form pyridoxal 5'-phosphate (PLP), pyridoxine 5'-phosphate (PNP) and pyridoxamine 5'-phosphate (PMP), respectively. PLP is the active form of vitamin B6, and acts as a cofactor for over 140 different enzymatic reactions. The sequence is that of Pyridoxal kinase (PDXK) from Ovis aries (Sheep).